A 391-amino-acid chain; its full sequence is Serine protease 7 (391 aa).

The N-terminal stretch at 1–27 (MKSTRKVVGIFLATCLLPFTVLQNVAA) is a signal peptide. A propeptide spans 28 to 136 (QGSCRNPNQK…KCGPHSFSNK (109 aa)) (activation peptide). One can recognise a Clip domain in the interval 30–84 (SCRNPNQKQGQCLSIYDCQSLLSVIQQSYVSPEDRTFLRNSQCLDGVGRQPYVCC). 3 disulfides stabilise this stretch: cysteine 31–cysteine 83, cysteine 41–cysteine 72, and cysteine 47–cysteine 84. The segment at 91–121 (GSQEATSAAPPPTTTSSSSRGQDGQAGLGNL) is disordered. 5 disulfides stabilise this stretch: cysteine 128-cysteine 264, cysteine 167-cysteine 183, cysteine 211-cysteine 216, cysteine 310-cysteine 327, and cysteine 337-cysteine 366. The 254-residue stretch at 137–390 (VYNGNDTAID…YMDWIVETIR (254 aa)) folds into the Peptidase S1 domain. Residue asparagine 141 is glycosylated (N-linked (GlcNAc...) asparagine). The Charge relay system role is filled by histidine 182. Ca(2+) contacts are provided by glutamate 202, aspartate 204, lysine 207, and aspartate 210. Residue aspartate 244 is the Charge relay system of the active site. Catalysis depends on serine 341, which acts as the Charge relay system.

The protein belongs to the peptidase S1 family. CLIP subfamily. Interacts with Spn27A.

It localises to the secreted. Its function is as follows. Serine protease that, by cleaving and activating prophenoloxidase (PPO1) after immune challenge, plays an essential role in the melanization immune response to septic wounding. May function in diverse Hayan-dependent PPO1-activating cascades that are negatively controlled by different serpin proteins; Spn27A in the hemolymph and Spn77BA in the trachea. Important for the innate immune response to fungi. Regulation of melanization and PPO1 activation appears to be largely independent of the Toll signaling pathway. The protein is Serine protease 7 of Drosophila melanogaster (Fruit fly).